Consider the following 340-residue polypeptide: Very-long-chain 3-oxoacyl-CoA reductase (340 aa).

A helical membrane pass occupies residues 23-43 (LQYTFAALGALYVLRGALSFV). NADP(+)-binding residues include valine 68, arginine 109, aspartate 123, aspartate 131, asparagine 150, lysine 185, tyrosine 217, lysine 221, valine 250, and threonine 252. The active-site Proton donor is the tyrosine 217. The Lowers pKa of active site Tyr role is filled by lysine 221.

It belongs to the short-chain dehydrogenases/reductases (SDR) family.

The protein localises to the endoplasmic reticulum membrane. It catalyses the reaction a very-long-chain (3R)-3-hydroxyacyl-CoA + NADP(+) = a very-long-chain 3-oxoacyl-CoA + NADPH + H(+). Its pathway is lipid metabolism; fatty acid biosynthesis. Component of the microsomal membrane bound fatty acid elongation system, which produces the 26-carbon very long-chain fatty acids (VLCFA) from palmitate. Catalyzes the reduction of the 3-ketoacyl-CoA intermediate that is formed in each cycle of fatty acid elongation. VLCFAs serve as precursors for ceramide and sphingolipids. This Podospora anserina (strain S / ATCC MYA-4624 / DSM 980 / FGSC 10383) (Pleurage anserina) protein is Very-long-chain 3-oxoacyl-CoA reductase.